Consider the following 81-residue polypeptide: Fungal defensin micasin (81 aa).

The first 21 residues, 1 to 21 (MQFTKLATILLVSLMGSAAIA), serve as a signal peptide directing secretion. The propeptide occupies 22 to 43 (APATNNAAVDAAADATPAVEKR). 3 disulfide bridges follow: C47-C68, C54-C76, and C58-C78.

This sequence belongs to the invertebrate defensin family.

Its subcellular location is the secreted. Functionally, antibacterial peptide with potent activity against both Gram-positive and Gram-negative bacteria. May kill bacteria via an intracellular action mode to affect protein folding. Does not show effects on tested filamentous fungi or on the yeast S.cerevisiae. Does not act by destroying the membrane integrity, which is consistent with its nonamphiphilic architecture. Acts more rapidly than vancomycin, suggesting it does not act by inhibiting cell-wall biosynthesis. Does not cause hemolysis and has no cytotoxic effect on HEK cells. In vivo, is as efficient as vancomycin to protect mouse peritonitis models from S.aureus and P.aeruginosa infections. This is Fungal defensin micasin from Arthroderma otae (Microsporum canis).